The following is a 471-amino-acid chain: Glutamate--tRNA ligase (471 aa).

A 'HIGH' region motif is present at residues 9 to 19 (PSPTGYLHVGG). The Zn(2+) site is built by Cys98, Cys100, Cys125, and His127. Positions 237-241 (KLSKR) match the 'KMSKS' region motif. Lys240 is a binding site for ATP.

It belongs to the class-I aminoacyl-tRNA synthetase family. Glutamate--tRNA ligase type 1 subfamily. Monomer. Zn(2+) is required as a cofactor.

It localises to the cytoplasm. The catalysed reaction is tRNA(Glu) + L-glutamate + ATP = L-glutamyl-tRNA(Glu) + AMP + diphosphate. Functionally, catalyzes the attachment of glutamate to tRNA(Glu) in a two-step reaction: glutamate is first activated by ATP to form Glu-AMP and then transferred to the acceptor end of tRNA(Glu). The chain is Glutamate--tRNA ligase from Escherichia coli (strain ATCC 8739 / DSM 1576 / NBRC 3972 / NCIMB 8545 / WDCM 00012 / Crooks).